The sequence spans 40 residues: MKVRKSLRSLKKKPGAQVIRRHGKVFVINKKDPRFKARQG.

This sequence belongs to the bacterial ribosomal protein bL36 family.

The sequence is that of Large ribosomal subunit protein bL36 from Corynebacterium aurimucosum (strain ATCC 700975 / DSM 44827 / CIP 107346 / CN-1) (Corynebacterium nigricans).